Here is a 356-residue protein sequence, read N- to C-terminus: 3-deoxy-alpha-D-manno-octulosonate 8-oxidase (356 aa).

The protein belongs to the iron-containing alcohol dehydrogenase family. The cofactor is a divalent metal cation.

The catalysed reaction is 3-deoxy-alpha-D-manno-oct-2-ulosonate + O2 = 3,8-dideoxy-8-oxo-alpha-D-manno-octulosonate + H2O2. It functions in the pathway bacterial outer membrane biogenesis; lipopolysaccharide biosynthesis. With respect to regulation, inhibited by EDTA. In terms of biological role, catalyzes the first step of the biosynthesis of Kdo8N (8-amino-3,8-dideoxy-D-manno-octulosonate) from Kdo (3-deoxy-D-manno-octulosonate). The sequence is that of 3-deoxy-alpha-D-manno-octulosonate 8-oxidase from Shewanella oneidensis (strain ATCC 700550 / JCM 31522 / CIP 106686 / LMG 19005 / NCIMB 14063 / MR-1).